Here is a 253-residue protein sequence, read N- to C-terminus: Triosephosphate isomerase (253 aa).

Residue 9–11 (NWK) coordinates substrate. Histidine 97 serves as the catalytic Electrophile. The Proton acceptor role is filled by glutamate 169. Residues glycine 175, serine 215, and 236 to 237 (GG) each bind substrate.

It belongs to the triosephosphate isomerase family. As to quaternary structure, homodimer.

The protein resides in the cytoplasm. It catalyses the reaction D-glyceraldehyde 3-phosphate = dihydroxyacetone phosphate. It functions in the pathway carbohydrate biosynthesis; gluconeogenesis. The protein operates within carbohydrate degradation; glycolysis; D-glyceraldehyde 3-phosphate from glycerone phosphate: step 1/1. In terms of biological role, involved in the gluconeogenesis. Catalyzes stereospecifically the conversion of dihydroxyacetone phosphate (DHAP) to D-glyceraldehyde-3-phosphate (G3P). The sequence is that of Triosephosphate isomerase from Staphylococcus aureus (strain NCTC 8325 / PS 47).